Consider the following 419-residue polypeptide: UDP-N-acetylglucosamine 1-carboxyvinyltransferase 2 (419 aa).

Lysine 24–asparagine 25 contributes to the phosphoenolpyruvate binding site. UDP-N-acetyl-alpha-D-glucosamine is bound at residue arginine 94. Cysteine 118 functions as the Proton donor in the catalytic mechanism. Cysteine 118 carries the post-translational modification 2-(S-cysteinyl)pyruvic acid O-phosphothioketal. UDP-N-acetyl-alpha-D-glucosamine-binding positions include arginine 123–glutamine 127, aspartate 307, and isoleucine 329.

It belongs to the EPSP synthase family. MurA subfamily.

The protein resides in the cytoplasm. The enzyme catalyses phosphoenolpyruvate + UDP-N-acetyl-alpha-D-glucosamine = UDP-N-acetyl-3-O-(1-carboxyvinyl)-alpha-D-glucosamine + phosphate. Its pathway is cell wall biogenesis; peptidoglycan biosynthesis. Cell wall formation. Adds enolpyruvyl to UDP-N-acetylglucosamine. The sequence is that of UDP-N-acetylglucosamine 1-carboxyvinyltransferase 2 from Staphylococcus aureus (strain MSSA476).